A 153-amino-acid polypeptide reads, in one-letter code: FAD synthase (153 aa).

ATP contacts are provided by residues 9–10 (TF), 14–17 (HPGH), D97, and Y124.

Belongs to the archaeal FAD synthase family. In terms of assembly, homodimer. Requires a divalent metal cation as cofactor.

The enzyme catalyses FMN + ATP + H(+) = FAD + diphosphate. The protein operates within cofactor biosynthesis; FAD biosynthesis; FAD from FMN: step 1/1. In terms of biological role, catalyzes the transfer of the AMP portion of ATP to flavin mononucleotide (FMN) to produce flavin adenine dinucleotide (FAD) coenzyme. In Methanobrevibacter smithii (strain ATCC 35061 / DSM 861 / OCM 144 / PS), this protein is FAD synthase.